The sequence spans 150 residues: MKVILTADVAKLGNRGTLVEVSEGYARNYLLPRGLAVEATAGRLKELDLEKKRREKKENQELENARRQAARLDGAVVKITTRAGETGKLFGSVTNKEIAEAIKNTFQISLDRRKIDLKEPIKALGSYEVTLKLHPTVQAHLRVQVVAEGS.

This sequence belongs to the bacterial ribosomal protein bL9 family.

In terms of biological role, binds to the 23S rRNA. The polypeptide is Large ribosomal subunit protein bL9 (Moorella thermoacetica (strain ATCC 39073 / JCM 9320)).